The chain runs to 305 residues: MLFIKIEIIAKTLLIINKKYTEIKMDELNVVNNINHAGTWLIRNQELLLRYTINLTSAIIILVVGMFISKIISNGANQVLITRNIDATIAGFLSALMRYIIITFTFIAALGRIGVQTTSVIAILGAAGMAIGLALQGSLSNFAAGVLLVTLRPLKTEEYVDLGSVSGTVLNIHIFYTTLRTLDGKIVVVPNNKIISGNIINYSREPARRNEFIISVSYNSDIDLVIKILRSVIEKEERVIKDKDIIVGLSELAPSSLNFIVRCWSKNHDLNTVYWDLMAKFKKELDKNNINIPFPQLDVHVYKKK.

Transmembrane regions (helical) follow at residues 52-72 (TINL…SKII), 89-109 (IAGF…FIAA), and 120-140 (VIAI…GSLS).

Belongs to the MscS (TC 1.A.23) family.

The protein resides in the cell membrane. This is an uncharacterized protein from Buchnera aphidicola subsp. Acyrthosiphon pisum (strain APS) (Acyrthosiphon pisum symbiotic bacterium).